Here is a 336-residue protein sequence, read N- to C-terminus: Fimbrial adhesin PapGII (336 aa).

A signal peptide spans methionine 1–alanine 20. Disulfide bonds link cysteine 64/cysteine 138 and cysteine 217/cysteine 249. D-galactose contacts are provided by residues glutamate 79 and glycine 124–tryptophan 127.

The protein belongs to the adhesin PapG family.

The protein localises to the secreted. It localises to the fimbrium. Functionally, tip adhesin component of type P pili that plays a critical role in kidney infection through targeted interaction with the globoseries glycolipids containing the Gal-alpha(1-4)-Gal disaccharide present on uroepithelial cells. In turn, transcriptionally regulates host gene expression in kidney cells, leading to inflammatory pathway activation and renal tissue damage. Acts thereby as key determinant of invasive uropathogenic E.coli (UPEC), which cause pyelonephritis and urinary-source bacteremia. The polypeptide is Fimbrial adhesin PapGII (Escherichia coli O6:H1 (strain CFT073 / ATCC 700928 / UPEC)).